Reading from the N-terminus, the 544-residue chain is GDP-mannose 4,6-dehydratase sdnI (544 aa).

NADP(+) is bound by residues 16–21 (GITGQD), arginine 41, 64–65 (DM), and 86–90 (LAAQS). Serine 90 serves as a coordination point for substrate. Catalysis depends on nucleophile residues glutamate 135 and tyrosine 157. Tyrosine 157 contacts substrate. Lysine 161 provides a ligand contact to NADP(+). Asparagine 186 serves as a coordination point for substrate. The NADP(+) site is built by histidine 187 and arginine 192. Residues 192–200 (RGTTFVTRK), glycine 219, arginine 225, and 303–306 (RPVE) each bind substrate. The interval 366 to 406 (GETTSAVNSSPSSTAGDTYKASDGWSTSGAEGSEQTECSSV) is disordered. 2 stretches are compositionally biased toward polar residues: residues 368–381 (TTSAVNSSPSSTAG) and 389–404 (GWSTSGAEGSEQTECS).

Belongs to the NAD(P)-dependent epimerase/dehydratase family. GDP-mannose 4,6-dehydratase subfamily. The cofactor is NADP(+).

The enzyme catalyses GDP-alpha-D-mannose = GDP-4-dehydro-alpha-D-rhamnose + H2O. Its pathway is antibiotic biosynthesis. Its function is as follows. GDP-mannose 4,6-dehydratase; part of the gene cluster that mediates the biosynthesis of sordarin and hypoxysordarin, glycoside antibiotics with a unique tetracyclic diterpene aglycone structure. First, the geranylgeranyl diphosphate synthase sdnC constructs GGDP from farnesyl diphosphate and isopentenyl diphosphate. The diterpene cyclase sdnA then catalyzes the cyclization of GGDP to afford cycloaraneosene. Cycloaraneosene is then hydroxylated four times by the putative cytochrome P450 monooxygenases sdnB, sdnE, sdnF and sdnH to give a hydroxylated cycloaraneosene derivative such as cycloaraneosene-8,9,13,19-tetraol. Although the order of the hydroxylations is unclear, at least C8, C9 and C13 of the cycloaraneosene skeleton are hydroxylated before the sordaricin formation. Dehydration of the 13-hydroxy group of the hydroxylated cycloaraneosene derivative might be catalyzed by an unassigned hypothetical protein such as sdnG and sdnP to construct the cyclopentadiene moiety. The FAD-dependent oxidoreductase sdnN is proposed to catalyze the oxidation at C9 of the hydroxylated cycloaraneosene derivative and also catalyze the Baeyer-Villiger oxidation to give the lactone intermediate. The presumed lactone intermediate would be hydrolyzed to give an acrolein moiety and a carboxylate moiety. Then, [4+2]cycloaddition would occur between the acrolein moiety and the cyclopentadiene moiety to give sordaricin. SdnN might also be involved in the [4+2]cycloaddition after the hypothesized oxidation to accommodate the oxidized product and prompt the [4+2]cycloaddition. GDP-6-deoxy-D-altrose may be biosynthesized from GDP-D-mannose by the putative GDP-mannose-4,6-dehydratase sdnI and the short-chain dehydrogenase sdnK. The glycosyltransferase sdnJ catalyzes the attachment of 6-deoxy-D-altrose onto the 19-hydroxy group of sordaricin to give 4'-O-demethylsordarin. The methyltransferase sdnD would complete the biosynthesis of sordarin. Sordarin can be further modified into hypoxysordarin. The unique acyl chain at the 3'-hydroxy group of hypoxysordarin would be constructed by an iterative type I PKS sdnO and the trans-acting polyketide methyltransferase sdnL. SdnL would be responsible for the introduction of an alpha-methyl group of the polyketide chain. Alternatively, the beta-lactamase-like protein sdnR might be responsible for the cleavage and transfer of the polyketide chain from the PKS sdnO to sordarin. Two putative cytochrome P450 monooxygenases, sdnQ and sdnT, might catalyze the epoxidations of the polyketide chain to complete the biosynthesis of hypoxysordarin. Transcriptional regulators sdnM and sdnS are presumably encoded for the transcriptional regulation of the expression of the sdn gene cluster. This Sordaria araneosa (Pleurage araneosa) protein is GDP-mannose 4,6-dehydratase sdnI.